A 2473-amino-acid polypeptide reads, in one-letter code: Reducing polyketide synthase grgA (2473 aa).

Residues R15 to S446 enclose the Ketosynthase family 3 (KS3) domain. Active-site for beta-ketoacyl synthase activity residues include C188, H327, and H366. Residues I559–A882 form the Malonyl-CoA:ACP transacylase (MAT) domain. Residues H956 to P1099 are N-terminal hotdog fold. Positions H956–R1260 are dehydratase (DH) domain. The PKS/mFAS DH domain occupies H956–P1262. Catalysis depends on H990, which acts as the Proton acceptor; for dehydratase activity. Positions M1114–P1262 are C-terminal hotdog fold. Residue D1172 is the Proton donor; for dehydratase activity of the active site. Positions T1300 to Q1606 are methyltransfrase (MT) domain. The 174-residue stretch at T2108–L2281 folds into the Ketoreductase (KR) domain. A Carrier domain is found at A2388–S2473. S2426 bears the O-(pantetheine 4'-phosphoryl)serine mark.

Pantetheine 4'-phosphate serves as cofactor.

Its pathway is secondary metabolite biosynthesis. Its function is as follows. Reducing polyketide synthase; part of the gene cluster that mediates the biosynthesis of gregatin A, a fungal polyketide featuring an alkylated furanone core. The PKS grgA synthesizes C11 and C4 polyketide chains in the presence and absence of the trans-enoyl reductase grgB, respectively. The polyketide transferase grgF is then responsible for the fusion of the two carbon chains to produce the furanone skeleton of gregatin A. Next, the cytochrome P450 monooxygenase grgG accepts performs the oxidative cyclization to furnish the gregatin scaffold and leads to the formation of desmethylgregatin A. Finally, the O-methyltransferase grgD methylates the carboxyl group of desmethylgregatin A to provide gregatin A. The protein is Reducing polyketide synthase grgA of Penicillium sp.